We begin with the raw amino-acid sequence, 630 residues long: Lysophospholipase 3 (630 aa).

The first 16 residues, 1–16 (MKALLSLLTAVAVATA), serve as a signal peptide directing secretion. Positions 39–587 (SCPATRPSIR…KEYCWNGTVD (549 aa)) constitute a PLA2c domain. Residues N56, N95, N164, N220, N283, N351, N390, N443, N456, N462, N493, N514, N542, N566, and N583 are each glycosylated (N-linked (GlcNAc...) asparagine). A lipid anchor (GPI-like-anchor amidated asparagine) is attached at N606. Positions 607-630 (AAYTQGVTWLVGILAVGVAMGMTA) are cleaved as a propeptide — removed in mature form.

Belongs to the lysophospholipase family. In terms of processing, the GPI-like anchor contains a phosphoceramide lipid group.

The protein localises to the cell membrane. It carries out the reaction a 1-acyl-sn-glycero-3-phosphocholine + H2O = sn-glycerol 3-phosphocholine + a fatty acid + H(+). Its function is as follows. Catalyzes the release of fatty acids from lysophospholipids. This chain is Lysophospholipase 3 (plb3), found in Aspergillus fumigatus (strain CBS 144.89 / FGSC A1163 / CEA10) (Neosartorya fumigata).